Here is a 170-residue protein sequence, read N- to C-terminus: Peptide deformylase (170 aa).

Cys91 and His133 together coordinate Fe cation. The active site involves Glu134. Position 137 (His137) interacts with Fe cation.

Belongs to the polypeptide deformylase family. Fe(2+) serves as cofactor.

The enzyme catalyses N-terminal N-formyl-L-methionyl-[peptide] + H2O = N-terminal L-methionyl-[peptide] + formate. Removes the formyl group from the N-terminal Met of newly synthesized proteins. Requires at least a dipeptide for an efficient rate of reaction. N-terminal L-methionine is a prerequisite for activity but the enzyme has broad specificity at other positions. This is Peptide deformylase from Pectobacterium carotovorum subsp. carotovorum (strain PC1).